Reading from the N-terminus, the 236-residue chain is Biosynthetic peptidoglycan transglycosylase (236 aa).

A helical transmembrane segment spans residues 20–40 (LVFIVLSVLILPYALIGLYLL).

Belongs to the glycosyltransferase 51 family.

It localises to the cell inner membrane. It catalyses the reaction [GlcNAc-(1-&gt;4)-Mur2Ac(oyl-L-Ala-gamma-D-Glu-L-Lys-D-Ala-D-Ala)](n)-di-trans,octa-cis-undecaprenyl diphosphate + beta-D-GlcNAc-(1-&gt;4)-Mur2Ac(oyl-L-Ala-gamma-D-Glu-L-Lys-D-Ala-D-Ala)-di-trans,octa-cis-undecaprenyl diphosphate = [GlcNAc-(1-&gt;4)-Mur2Ac(oyl-L-Ala-gamma-D-Glu-L-Lys-D-Ala-D-Ala)](n+1)-di-trans,octa-cis-undecaprenyl diphosphate + di-trans,octa-cis-undecaprenyl diphosphate + H(+). It participates in cell wall biogenesis; peptidoglycan biosynthesis. In terms of biological role, peptidoglycan polymerase that catalyzes glycan chain elongation from lipid-linked precursors. The sequence is that of Biosynthetic peptidoglycan transglycosylase from Rhizobium meliloti (strain 1021) (Ensifer meliloti).